We begin with the raw amino-acid sequence, 324 residues long: Methyltransferase pytC (324 aa).

The interval 1 to 28 (MTVRTAAEPPNRIEVDMDAPSLDTDSSC) is disordered.

This sequence belongs to the methyltransferase superfamily. LaeA methyltransferase family.

Its pathway is secondary metabolite biosynthesis. Its function is as follows. Methyltransferase; part of the gene cluster that mediates the biosynthesis of pyranterreones, a family of antioxidative compounds. The first step of pyranonigrins biosynthesis is performed by the hybrid PKS-NRPS synthetase pytA that condenses 4 malonyl-CoA units ato the acetyl starter unit by the modular PKS of pytA. The acyl chain is then connected to an L-serine through the amide bond by the modular NRPS of pytA. A tetramic acid is formed and released from the PKS-NRPS pytA to give pyranterreone 5 with the help of the thioesterase pytI. Pyranterreone 5 could be methylated by pytC to afford pyranterreone 6. Both pyranterreones 5 and 6 are subsequently oxidized by the FAD-linked oxidoreductase pytB and the cytochrome P450 monooxygenase pytD to form the fused gamma-pyrone core, resulting in pyranterreones 7 and 11, respectively. The hydroxy group at C-8 of pyranterreones 7 and 11 are dehydrated by the aspartyl protease pytH to form a delta-7 double bond to give pyranterreones 3 and 1, 2 accordingly. The exo-methylene of pyranterreone 3 could be reduced into a pendant methyl by reductase pytE to provide pyranterreone 4, also known as cordylactam. Pyranterreone 4 can be reconverted to pyranterreone 3 through pytB-catalyzed dehydrogenation or further oxidized to pyranterreones 9 and 10. The polypeptide is Methyltransferase pytC (Aspergillus terreus).